We begin with the raw amino-acid sequence, 929 residues long: Isoleucine--tRNA ligase (929 aa).

Positions 58–68 (PYANGDIHIGH) match the 'HIGH' region motif. E563 contacts L-isoleucyl-5'-AMP. A 'KMSKS' region motif is present at residues 605–609 (KMSKS). K608 contacts ATP. Residues C892, C895, C912, and C915 each coordinate Zn(2+).

It belongs to the class-I aminoacyl-tRNA synthetase family. IleS type 1 subfamily. In terms of assembly, monomer. The cofactor is Zn(2+).

Its subcellular location is the cytoplasm. It carries out the reaction tRNA(Ile) + L-isoleucine + ATP = L-isoleucyl-tRNA(Ile) + AMP + diphosphate. Catalyzes the attachment of isoleucine to tRNA(Ile). As IleRS can inadvertently accommodate and process structurally similar amino acids such as valine, to avoid such errors it has two additional distinct tRNA(Ile)-dependent editing activities. One activity is designated as 'pretransfer' editing and involves the hydrolysis of activated Val-AMP. The other activity is designated 'posttransfer' editing and involves deacylation of mischarged Val-tRNA(Ile). This Neisseria meningitidis serogroup A / serotype 4A (strain DSM 15465 / Z2491) protein is Isoleucine--tRNA ligase.